Consider the following 397-residue polypeptide: Probable tRNA sulfurtransferase (397 aa).

In terms of domain architecture, THUMP spans 60-165 (HPVIEKLQEV…KEGTYITAYD (106 aa)). ATP is bound by residues 183–184 (ML), 208–209 (HF), arginine 265, glycine 287, and glutamine 296.

The protein belongs to the ThiI family.

The protein resides in the cytoplasm. The enzyme catalyses [ThiI sulfur-carrier protein]-S-sulfanyl-L-cysteine + a uridine in tRNA + 2 reduced [2Fe-2S]-[ferredoxin] + ATP + H(+) = [ThiI sulfur-carrier protein]-L-cysteine + a 4-thiouridine in tRNA + 2 oxidized [2Fe-2S]-[ferredoxin] + AMP + diphosphate. It catalyses the reaction [ThiS sulfur-carrier protein]-C-terminal Gly-Gly-AMP + S-sulfanyl-L-cysteinyl-[cysteine desulfurase] + AH2 = [ThiS sulfur-carrier protein]-C-terminal-Gly-aminoethanethioate + L-cysteinyl-[cysteine desulfurase] + A + AMP + 2 H(+). It participates in cofactor biosynthesis; thiamine diphosphate biosynthesis. In terms of biological role, catalyzes the ATP-dependent transfer of a sulfur to tRNA to produce 4-thiouridine in position 8 of tRNAs, which functions as a near-UV photosensor. Also catalyzes the transfer of sulfur to the sulfur carrier protein ThiS, forming ThiS-thiocarboxylate. This is a step in the synthesis of thiazole, in the thiamine biosynthesis pathway. The sulfur is donated as persulfide by IscS. This is Probable tRNA sulfurtransferase from Anoxybacillus flavithermus (strain DSM 21510 / WK1).